The chain runs to 399 residues: Replication-associated protein ORF4 (399 aa).

Catalysis depends on O-(5'-phospho-DNA)-tyrosine intermediate residues Y251 and Y255.

This sequence belongs to the microviridae Rep protein family.

The catalysed reaction is ATP + (deoxyribonucleotide)n-3'-hydroxyl + 5'-phospho-(deoxyribonucleotide)m = (deoxyribonucleotide)n+m + AMP + diphosphate.. Plays an essential role in viral DNA replication. Binds the origin of replication and cleaves the dsDNA replicative form I (RFI) and becomes covalently bound to it via phosphotyrosine bond, generating the dsDNA replicative form II (RFII). In turn, viral DNA replication initiates at the 3'-OH of the cleavage site. After one round of rolling circle synthesis, protein ORF4 is linked to the newly synthesized ssDNA and joins the ends of the displaced strand to generate a circular single-stranded molecule ready to be packed into a virion. This is Replication-associated protein ORF4 from Chlamydia psittaci (Chlamydophila psittaci).